The chain runs to 469 residues: Spermatogenesis-associated protein 21 (469 aa).

Disordered regions lie at residues methionine 1–glutamine 76 and histidine 99–proline 157. The segment covering glutamate 49–arginine 61 has biased composition (basic and acidic residues). Residues alanine 62–alanine 73 are compositionally biased toward low complexity. Polar residues predominate over residues alanine 105–alanine 132. Residues alanine 146–proline 157 are compositionally biased toward pro residues. A coiled-coil region spans residues glutamate 198–alanine 225. In terms of domain architecture, EF-hand spans valine 255–phenylalanine 290. Positions 268, 270, 272, 274, and 279 each coordinate Ca(2+). Residues tyrosine 424 to histidine 469 are disordered. The segment covering asparagine 450–lysine 459 has biased composition (basic and acidic residues).

Functionally, involved in the differentiation of haploid spermatids. This Homo sapiens (Human) protein is Spermatogenesis-associated protein 21 (SPATA21).